Consider the following 365-residue polypeptide: UDP-N-acetylglucosamine--N-acetylmuramyl-(pentapeptide) pyrophosphoryl-undecaprenol N-acetylglucosamine transferase (365 aa).

UDP-N-acetyl-alpha-D-glucosamine is bound by residues 19-21 (TGG), N131, R170, S201, I255, 274-279 (ALTVTE), and Q300.

This sequence belongs to the glycosyltransferase 28 family. MurG subfamily.

It is found in the cell inner membrane. The enzyme catalyses di-trans,octa-cis-undecaprenyl diphospho-N-acetyl-alpha-D-muramoyl-L-alanyl-D-glutamyl-meso-2,6-diaminopimeloyl-D-alanyl-D-alanine + UDP-N-acetyl-alpha-D-glucosamine = di-trans,octa-cis-undecaprenyl diphospho-[N-acetyl-alpha-D-glucosaminyl-(1-&gt;4)]-N-acetyl-alpha-D-muramoyl-L-alanyl-D-glutamyl-meso-2,6-diaminopimeloyl-D-alanyl-D-alanine + UDP + H(+). The protein operates within cell wall biogenesis; peptidoglycan biosynthesis. Functionally, cell wall formation. Catalyzes the transfer of a GlcNAc subunit on undecaprenyl-pyrophosphoryl-MurNAc-pentapeptide (lipid intermediate I) to form undecaprenyl-pyrophosphoryl-MurNAc-(pentapeptide)GlcNAc (lipid intermediate II). This Acinetobacter baylyi (strain ATCC 33305 / BD413 / ADP1) protein is UDP-N-acetylglucosamine--N-acetylmuramyl-(pentapeptide) pyrophosphoryl-undecaprenol N-acetylglucosamine transferase.